A 414-amino-acid polypeptide reads, in one-letter code: uncharacterized protein (414 aa).

An N-terminal signal peptide occupies residues 1 to 16 (MRVILLLAFLISLTEC). Residues 20-59 (SEDLALYDLVEEVGVNFYEWFDIPRDASSNQVKKAYRKLT) form the Myb-like 1 domain. Positions 35 to 99 (NFYEWFDIPR…ELREKYDNVL (65 aa)) constitute a J domain. The helical transmembrane segment at 125 to 145 (ILVLLFIGTIAHYLMMWAAYF) threads the bilayer. The disordered stretch occupies residues 211-234 (MTPKEVEPEEPTEEELAQQRRQQR). The span at 217 to 226 (EPEEPTEEEL) shows a compositional bias: acidic residues. The 47-residue stretch at 274-320 (AQKQSGATWTPDELASLVRLSTEKYPAGTPNRWEQMGRVLNRSAEDV) folds into the Myb-like 2 domain. Residues 352–407 (KSEDDWSQAEQKAFETALQKYPKGTDERWERISEEIGSKTKKQVMVRFKQLAEMIR) form the SANT domain.

The protein resides in the nucleus membrane. This is an uncharacterized protein from Caenorhabditis elegans.